The chain runs to 66 residues: Beta-toxin Chui2 (66 aa).

Positions 1–66 (KEGYIVNSYT…VWPLKNKTCN (66 aa)) constitute an LCN-type CS-alpha/beta domain. 4 disulfide bridges follow: C12–C65, C16–C41, C25–C46, and C29–C48. Position 66 is an asparagine amide (N66).

Belongs to the long (4 C-C) scorpion toxin superfamily. Sodium channel inhibitor family. Beta subfamily. Expressed by the venom gland.

It is found in the secreted. Beta toxins bind voltage-independently at site-4 of sodium channels (Nav) and shift the voltage of activation toward more negative potentials thereby affecting sodium channel activation and promoting spontaneous and repetitive firing. The chain is Beta-toxin Chui2 from Centruroides huichol (Scorpion).